Reading from the N-terminus, the 166-residue chain is RING-H2 finger protein ATL79 (166 aa).

The first 16 residues, 1-16 (MRLLVAEAASPLSSAA), serve as a signal peptide directing secretion. Residues 41–61 (SVLLILVISALICALSLYAAI) form a helical membrane-spanning segment. The segment at 71–90 (TEDDHKPDPEAAASSTPTTP) is disordered. Residues 81–90 (AAASSTPTTP) show a composition bias toward low complexity. Residues 107–149 (CAICLSEFEQGESIQVLEKCQHGFHVKCIHKWLSTRSSCPTCR) form an RING-type; atypical zinc finger.

The protein belongs to the RING-type zinc finger family. ATL subfamily.

It is found in the membrane. It catalyses the reaction S-ubiquitinyl-[E2 ubiquitin-conjugating enzyme]-L-cysteine + [acceptor protein]-L-lysine = [E2 ubiquitin-conjugating enzyme]-L-cysteine + N(6)-ubiquitinyl-[acceptor protein]-L-lysine.. It functions in the pathway protein modification; protein ubiquitination. In Arabidopsis thaliana (Mouse-ear cress), this protein is RING-H2 finger protein ATL79 (ATL79).